A 527-amino-acid polypeptide reads, in one-letter code: Catalase (527 aa).

A compositionally biased stretch (basic and acidic residues) spans 1-22 (MADNRDPASDQMKHWKEQRAAQ). Residues 1–42 (MADNRDPASDQMKHWKEQRAAQKPDVLTTGGGNPVGDKLNSL) form a disordered region. At alanine 2 the chain carries Blocked amino end (Ala); alternate. Residue alanine 2 is modified to N-acetylalanine; alternate. Position 9 is a phosphoserine (serine 9). Position 13 is an N6-succinyllysine (lysine 13). Catalysis depends on residues histidine 75 and asparagine 148. Histidine 194, phenylalanine 198, serine 201, arginine 203, asparagine 213, and tyrosine 215 together coordinate NADP(+). Lysine 221 bears the N6-succinyllysine mark. N6-acetyllysine is present on lysine 233. Positions 237, 303, and 305 each coordinate NADP(+). Tyrosine 358 contributes to the heme binding site. Phosphoserine is present on residues serine 417 and serine 434. Glutamine 442, threonine 445, and phenylalanine 446 together coordinate NADP(+). N6-acetyllysine; alternate occurs at positions 449 and 480. An N6-succinyllysine; alternate mark is found at lysine 449 and lysine 480. Lysine 499 bears the N6-acetyllysine mark. Position 511 is a phosphothreonine (threonine 511). Position 517 is a phosphoserine (serine 517). The Microbody targeting signal; atypical motif lies at 524 to 527 (KANL).

This sequence belongs to the catalase family. As to quaternary structure, homotetramer. Interacts (via microbody targeting signal) with PEX5, monomeric form interacts with PEX5, leading to its translocation into peroxisomes. Requires heme as cofactor. It depends on NADP(+) as a cofactor.

Its subcellular location is the peroxisome matrix. It carries out the reaction 2 H2O2 = O2 + 2 H2O. Functionally, catalyzes the degradation of hydrogen peroxide (H(2)O(2)) generated by peroxisomal oxidases to water and oxygen, thereby protecting cells from the toxic effects of hydrogen peroxide. Promotes growth of cells including T-cells, B-cells, myeloid leukemia cells, melanoma cells, mastocytoma cells and normal and transformed fibroblast cells. In Bos taurus (Bovine), this protein is Catalase (CAT).